The chain runs to 90 residues: Protein LIM1 (90 aa).

A signal peptide spans 1–26 (MASMKSLATAILVVLLLAALSREGRS). Intrachain disulfides connect C29/C66, C39/C55, C56/C81, and C68/C88.

The protein belongs to the A9/FIL1 family.

It is found in the secreted. The polypeptide is Protein LIM1 (LIM1) (Lilium longiflorum (Trumpet lily)).